The sequence spans 83 residues: NAD(P)H-quinone oxidoreductase subunit L (83 aa).

Transmembrane regions (helical) follow at residues 17–37 and 53–73; these read VLLAYGALGGAYLLVVPLALL and TAIYGMVFLFFPGLILFAPFI.

This sequence belongs to the complex I NdhL subunit family. NDH-1 can be composed of about 15 different subunits; different subcomplexes with different compositions have been identified which probably have different functions.

The protein resides in the cellular thylakoid membrane. It catalyses the reaction a plastoquinone + NADH + (n+1) H(+)(in) = a plastoquinol + NAD(+) + n H(+)(out). It carries out the reaction a plastoquinone + NADPH + (n+1) H(+)(in) = a plastoquinol + NADP(+) + n H(+)(out). In terms of biological role, NDH-1 shuttles electrons from an unknown electron donor, via FMN and iron-sulfur (Fe-S) centers, to quinones in the respiratory and/or the photosynthetic chain. The immediate electron acceptor for the enzyme in this species is believed to be plastoquinone. Couples the redox reaction to proton translocation, and thus conserves the redox energy in a proton gradient. Cyanobacterial NDH-1 also plays a role in inorganic carbon-concentration. In Synechococcus sp. (strain RCC307), this protein is NAD(P)H-quinone oxidoreductase subunit L.